A 612-amino-acid chain; its full sequence is Dihydroxy-acid dehydratase (612 aa).

D81 is a binding site for Mg(2+). C122 is a [2Fe-2S] cluster binding site. 2 residues coordinate Mg(2+): D123 and K124. K124 carries the post-translational modification N6-carboxylysine. C193 provides a ligand contact to [2Fe-2S] cluster. Residue E489 coordinates Mg(2+). The Proton acceptor role is filled by S515.

It belongs to the IlvD/Edd family. As to quaternary structure, homodimer. The cofactor is [2Fe-2S] cluster. Requires Mg(2+) as cofactor.

It catalyses the reaction (2R)-2,3-dihydroxy-3-methylbutanoate = 3-methyl-2-oxobutanoate + H2O. The enzyme catalyses (2R,3R)-2,3-dihydroxy-3-methylpentanoate = (S)-3-methyl-2-oxopentanoate + H2O. Its pathway is amino-acid biosynthesis; L-isoleucine biosynthesis; L-isoleucine from 2-oxobutanoate: step 3/4. It participates in amino-acid biosynthesis; L-valine biosynthesis; L-valine from pyruvate: step 3/4. Functionally, functions in the biosynthesis of branched-chain amino acids. Catalyzes the dehydration of (2R,3R)-2,3-dihydroxy-3-methylpentanoate (2,3-dihydroxy-3-methylvalerate) into 2-oxo-3-methylpentanoate (2-oxo-3-methylvalerate) and of (2R)-2,3-dihydroxy-3-methylbutanoate (2,3-dihydroxyisovalerate) into 2-oxo-3-methylbutanoate (2-oxoisovalerate), the penultimate precursor to L-isoleucine and L-valine, respectively. The chain is Dihydroxy-acid dehydratase from Xanthomonas campestris pv. campestris (strain 8004).